A 253-amino-acid polypeptide reads, in one-letter code: Putative cysteine-rich repeat secretory protein 33 (253 aa).

Positions Met1 to Ser28 are cleaved as a signal peptide. Gnk2-homologous domains lie at Glu34–Asp133 and Tyr141–Phe250.

This sequence belongs to the cysteine-rich repeat secretory protein family.

The protein localises to the secreted. In Arabidopsis thaliana (Mouse-ear cress), this protein is Putative cysteine-rich repeat secretory protein 33 (CRRSP33).